A 245-amino-acid chain; its full sequence is 1-(5-phosphoribosyl)-5-[(5-phosphoribosylamino)methylideneamino] imidazole-4-carboxamide isomerase (245 aa).

Residue D7 is the Proton acceptor of the active site. The Proton donor role is filled by D129.

The protein belongs to the HisA/HisF family.

It is found in the cytoplasm. The catalysed reaction is 1-(5-phospho-beta-D-ribosyl)-5-[(5-phospho-beta-D-ribosylamino)methylideneamino]imidazole-4-carboxamide = 5-[(5-phospho-1-deoxy-D-ribulos-1-ylimino)methylamino]-1-(5-phospho-beta-D-ribosyl)imidazole-4-carboxamide. Its pathway is amino-acid biosynthesis; L-histidine biosynthesis; L-histidine from 5-phospho-alpha-D-ribose 1-diphosphate: step 4/9. The chain is 1-(5-phosphoribosyl)-5-[(5-phosphoribosylamino)methylideneamino] imidazole-4-carboxamide isomerase from Salmonella heidelberg (strain SL476).